Reading from the N-terminus, the 479-residue chain is Variant surface glycoprotein ILTAT 1.22 (479 aa).

The first 12 residues, 1–12 (MDTAQVFALFYM), serve as a signal peptide directing secretion. N-linked (GlcNAc...) asparagine glycans are attached at residues Asn120 and Asn458. Residue Asn462 is the site of GPI-anchor amidated asparagine attachment. Positions 463-479 (NSFAIKTSTLLLAVLLF) are cleaved as a propeptide — removed in mature form.

It is found in the cell membrane. Its function is as follows. VSG forms a coat on the surface of the parasite. The trypanosome evades the immune response of the host by expressing a series of antigenically distinct VSGs from an estimated 1000 VSG genes. This is Variant surface glycoprotein ILTAT 1.22 from Trypanosoma brucei brucei.